Reading from the N-terminus, the 406-residue chain is MHFQVILMMMWLWLEAEGGTCPTLYKRYSKHHTYCLHPNSTCKILTRGVSSGDKEIILREHNKLRSRVATGKETKYSLPKASDMMQLVWDDELASVAQKHADQCVFEHDCNDCRNVQNFGVGQNLHLRTSSAKFSDITWAGAVNGWYDEVKDFNKRQISGFIDGKGPPQTGHFTQAVWATSWRVGCGRSMFKDGNTFKDLYTCNYGPGGNMKNAIIYTKGKPCSGCPLNSCCGKACGGISYDGLCKMSGNTAPQYSPPKGFAFRCTFNGESDCATTTSGAKKWKTIKTLSGSFIGIVLNPGESSTLSFTVPFGVSDGSMCVESYYRKGPQVAGQVAAGNAVEKFGDPADPSFDYSTPLKESTDFMQFGVTLGWNTKTTLSVVFSVPPGTAPQYLEMKDISVRKGEC.

The first 18 residues, 1–18, serve as a signal peptide directing secretion; sequence MHFQVILMMMWLWLEAEG. N39 carries N-linked (GlcNAc...) asparagine glycosylation. Residues 58–205 enclose the SCP domain; that stretch reads LREHNKLRSR…TFKDLYTCNY (148 aa).

This sequence belongs to the CRISP family. Post-translationally, contains 9 disulfide bonds. Expressed by the venom gland.

It is found in the secreted. This is CRISP/Allergen/PR-1 from Trittame loki (Brush-footed trapdoor spider).